We begin with the raw amino-acid sequence, 117 residues long: Large ribosomal subunit protein uL18 (117 aa).

The protein belongs to the universal ribosomal protein uL18 family. In terms of assembly, part of the 50S ribosomal subunit; part of the 5S rRNA/L5/L18/L25 subcomplex. Contacts the 5S and 23S rRNAs.

Its function is as follows. This is one of the proteins that bind and probably mediate the attachment of the 5S RNA into the large ribosomal subunit, where it forms part of the central protuberance. The polypeptide is Large ribosomal subunit protein uL18 (Leuconostoc mesenteroides subsp. mesenteroides (strain ATCC 8293 / DSM 20343 / BCRC 11652 / CCM 1803 / JCM 6124 / NCDO 523 / NBRC 100496 / NCIMB 8023 / NCTC 12954 / NRRL B-1118 / 37Y)).